The primary structure comprises 119 residues: DNA-binding protein inhibitor ID-3 (119 aa).

The bHLH domain maps to 28 to 80; it reads RGKGPAAEEPLSLLDDMNHCYSRLRELVPGVPRGTQLSQVEILQRVIDYILDL.

In terms of assembly, homodimer, and heterodimer with other HLH proteins. Interacts with COPS5 and COPS7A. Interacts with IFI204. Interacts with GATA4 and NKX2-5. Interacts with ANKRD2; both proteins cooperate in myoblast differentiation. Interacts with CLOCK and BMAL1.

The protein localises to the nucleus. In terms of biological role, transcriptional regulator (lacking a basic DNA binding domain) which negatively regulates the basic helix-loop-helix (bHLH) transcription factors by forming heterodimers and inhibiting their DNA binding and transcriptional activity. Implicated in regulating a variety of cellular processes, including cellular growth, senescence, differentiation, apoptosis, angiogenesis, and neoplastic transformation. Involved in myogenesis by inhibiting skeletal muscle and cardiac myocyte differentiation and promoting muscle precursor cells proliferation. Inhibits the binding of E2A-containing protein complexes to muscle creatine kinase E-box enhancer. Regulates the circadian clock by repressing the transcriptional activator activity of the CLOCK-BMAL1 heterodimer. The polypeptide is DNA-binding protein inhibitor ID-3 (ID3) (Canis lupus familiaris (Dog)).